We begin with the raw amino-acid sequence, 275 residues long: Transcription regulator AOL_s00215g275 (275 aa).

Disordered regions lie at residues Thr13–Gly65 and Ile84–Leu108. The span at Pro14–Arg26 shows a compositional bias: polar residues. Residues Thr27 to Pro40 show a composition bias toward low complexity. A compositionally biased stretch (polar residues) spans Thr47–Leu60. Residues Lys88 to Gln106 show a composition bias toward basic residues.

Regulatory protein; part of the gene cluster that mediates the biosynthesis of sesquiterpenyl epoxy-cyclohexenoids (SECs) such as anthrobotrisins and arthrosporols, metabolites that possess a novel hybrid carbon skeleton consisting of a polyketide-derived epoxycyclohexenol combined with a terpenoid-derived monocyclic sesquiterpenol substructure (PKS-PTS hybrid). The SEC pathway plays an important role for fungal soil colonization via decreasing fungal nematode-capturing ability. AOL_s00215g275 can perform multiple functions in fungal growth and development via regulating the SEC biosynthesis, TCA cycle, and septa formation. Also involved in inhibiting conidial formation, germination, and nematicidal activity but promotes trap production. Plays a role in fungal resistances and significantly regulates the fungal morphology and responses to chemical stressors such as cell-wall-perturbing agents (SDS and Congo red), osmotic agents (NaCl and sorbitol), or the oxidant H(2)O(2). In Arthrobotrys oligospora (strain ATCC 24927 / CBS 115.81 / DSM 1491) (Nematode-trapping fungus), this protein is Transcription regulator AOL_s00215g275.